The primary structure comprises 118 residues: Beta-defensin 126 (118 aa).

The signal sequence occupies residues 1 to 20 (MKSLLFTLAVFMLLAQLVSG). The segment at 21 to 63 (SWYVKKCLNDVGICKKKCKPEELHVKNGWAMCGKQRDCCVPAD) is in vitro binds to LPS, mediates antimicrobial activity and inhibits LPS-mediated inflammation. Cystine bridges form between cysteine 27–cysteine 58, cysteine 34–cysteine 52, and cysteine 38–cysteine 59.

It belongs to the beta-defensin family. In terms of assembly, homodimer or homooligomer; disulfide-linked. Post-translationally, O-glycosylated; glycans contain alpha(2,3)-linked sialic acids.

It localises to the secreted. Functionally, highly glycosylated atypical beta-defensin involved in several aspects of sperm function. Facilitates sperm transport in the female reproductive tract and contributes to sperm protection against immunodetection; both functions are probably implicating the negative surface charge provided by its O-linked oligosaccharides in the sperm glycocalyx. Involved in binding of sperm to oviductal epithelial cells to form a sperm reservoir until ovulation. Release from the sperm surface during capacitation and ovaluation by an elevation of oviductal fluid pH is unmasking other surface components and allows sperm to penetrate the cumulus matrix and bind to the zona pellucida of the oocyte. In vitro has antimicrobial activity and may inhibit LPS-mediated inflammation. The chain is Beta-defensin 126 (DEFB126) from Pongo pygmaeus (Bornean orangutan).